The following is a 967-amino-acid chain: Leucine--tRNA ligase (967 aa).

The 'HIGH' region signature appears at 43–53; the sequence is PYLSGHLHVGH. A 'KMSKS' region motif is present at residues 650 to 654; the sequence is KMSKS. An ATP-binding site is contributed by lysine 653.

The protein belongs to the class-I aminoacyl-tRNA synthetase family.

Its subcellular location is the cytoplasm. It catalyses the reaction tRNA(Leu) + L-leucine + ATP = L-leucyl-tRNA(Leu) + AMP + diphosphate. The chain is Leucine--tRNA ligase from Pyrococcus furiosus (strain ATCC 43587 / DSM 3638 / JCM 8422 / Vc1).